The primary structure comprises 205 residues: High frequency lysogenization protein HflD homolog (205 aa).

It belongs to the HflD family.

It is found in the cytoplasm. The protein resides in the cell inner membrane. The chain is High frequency lysogenization protein HflD homolog from Aliivibrio fischeri (strain ATCC 700601 / ES114) (Vibrio fischeri).